Consider the following 617-residue polypeptide: MKQSKMPIPTLREMPSDAQVISHALMLRAGYVRQVSAGVYSYLPLANRVIEKAKNIMRQEFEKIGAVEMLAPALLSAELWRESGRYETYGEDLYKLKNREKSDFILGPTHEETFTAIVRDSVKSYKQLPLNLYQIQPKYRDEKRPRNGLLRTREFIMKDAYSFHANYDSLDSVYDEYKAAYERIFTRSGLDFKAIIGDGGAMGGKDSQEFMAITSARTDLDRWVVLDKSVASFDEIPAEVQEEIKAELLKWIVSGEDTIAYSSESSYAANLEMATNEYKPSNRVIAEEEVIRVATPDVKSIDEVAAFLNVPEEQTIKTLFYIADGELVAALLVGNDQLNEVKLKNHLGADFFDVASEEEVANVVQAGFGSLGPVGLPENIKIIADRKVQDVRNAVVGANEDGYHLTGVNPGRDFTAEYVDIREVREGEISPDGQGVLNFARGIEIGHIFKLGTRYSASMGADVLDENGRAVPIIMGCYGIGVSRLLSAVMEQHARLFVNKTPKGEYRYAWGINFPKELAPFDVHLITVNVKDEEAQALTEKLEASLMGAGYEVLTDDRNERVGVKFSDSDLIGLPIRITVGKKAADGIVEVKIKATGDTIEVHADNVLETLEILSKK.

It belongs to the class-II aminoacyl-tRNA synthetase family. ProS type 1 subfamily. Homodimer.

It localises to the cytoplasm. The catalysed reaction is tRNA(Pro) + L-proline + ATP = L-prolyl-tRNA(Pro) + AMP + diphosphate. Functionally, catalyzes the attachment of proline to tRNA(Pro) in a two-step reaction: proline is first activated by ATP to form Pro-AMP and then transferred to the acceptor end of tRNA(Pro). As ProRS can inadvertently accommodate and process non-cognate amino acids such as alanine and cysteine, to avoid such errors it has two additional distinct editing activities against alanine. One activity is designated as 'pretransfer' editing and involves the tRNA(Pro)-independent hydrolysis of activated Ala-AMP. The other activity is designated 'posttransfer' editing and involves deacylation of mischarged Ala-tRNA(Pro). The misacylated Cys-tRNA(Pro) is not edited by ProRS. The protein is Proline--tRNA ligase of Streptococcus pneumoniae (strain 70585).